Consider the following 428-residue polypeptide: Enolase (428 aa).

Glutamine 163 contributes to the (2R)-2-phosphoglycerate binding site. The active-site Proton donor is glutamate 205. Residues aspartate 242, glutamate 286, and aspartate 313 each coordinate Mg(2+). Residues lysine 338, arginine 367, serine 368, and lysine 389 each coordinate (2R)-2-phosphoglycerate. Lysine 338 acts as the Proton acceptor in catalysis.

This sequence belongs to the enolase family. Requires Mg(2+) as cofactor.

The protein resides in the cytoplasm. Its subcellular location is the secreted. It localises to the cell surface. The catalysed reaction is (2R)-2-phosphoglycerate = phosphoenolpyruvate + H2O. It functions in the pathway carbohydrate degradation; glycolysis; pyruvate from D-glyceraldehyde 3-phosphate: step 4/5. Its function is as follows. Catalyzes the reversible conversion of 2-phosphoglycerate (2-PG) into phosphoenolpyruvate (PEP). It is essential for the degradation of carbohydrates via glycolysis. The polypeptide is Enolase (Geobacter sulfurreducens (strain ATCC 51573 / DSM 12127 / PCA)).